The sequence spans 228 residues: Ribonuclease HII (228 aa).

The region spanning Arg-26–Asp-214 is the RNase H type-2 domain. The a divalent metal cation site is built by Asp-32, Glu-33, and Asp-124.

This sequence belongs to the RNase HII family. Mn(2+) is required as a cofactor. Mg(2+) serves as cofactor.

It localises to the cytoplasm. It catalyses the reaction Endonucleolytic cleavage to 5'-phosphomonoester.. Endonuclease that specifically degrades the RNA of RNA-DNA hybrids. The protein is Ribonuclease HII of Solibacter usitatus (strain Ellin6076).